The sequence spans 742 residues: MSDSCPVAHEGNTQSTSESENPVIPSPTPAANRPRNNRDWWPNQPELSVLHAHTSKSNPMGEDFDYAEEFAKLDVEALKRDVIDLMTTSQDWWPADYGHYGGLFIRMSWHAAGTYRIADGRGGGGQGAQRFAPLNSWPDNANLDKARRLLWPVKQKYGKQISWADLLVFAGNCALESMGFKTFGFGFGREDIWEPEEMYWGPEDTWLGDERYSGDRELSGPLGAVQMGLIYVNPEGPNGQPDPLAAARDIRETFSRMAMNDVETAALIAGGHTFGKTHGAGDADLVGPEPEGAPIEQQGLGWKSAYGTGVGKDAITSGLEVVWTPTPTKWDNSFLEVLYGYEWELTKSPAGAWQWTAKDGAGAGTIPDPFDSSAGRAPTMLTTDLSLRIDPAYEKITRRWLDHPEEFAEEFAKAWYKLLHRDMGPVTRYLGPWVPEAQLWQDPVPAVDHQLIGDSEIAALKGKILDSGLSIPQLVSTAWASAATHRSTDMRGGANGARIRLAPQKDWEINSPAELSTILQTLEQIQQDFNSSQSGGVKVSLADVIVLAGAAAVEKAAKNAGHDVTVPFTPGRTDATQEQTDVESFAVLEPKADGFRNYLRAGEKLPAEALLVDRAYMLNLTAPEMTVLVGGLRALNANFGQTKHGVFTDRPEALTNDFFVNLLDMGTEWKGASSAENVYEGTDRVTGAAKWTATAVDLVFGSNSQLRALAEVYAADDAQQKFVQDFVSAWNKVMNLDRFDLD.

The tract at residues 1 to 43 (MSDSCPVAHEGNTQSTSESENPVIPSPTPAANRPRNNRDWWPN) is disordered. Residues 11-20 (GNTQSTSESE) are compositionally biased toward polar residues. Residues 109 to 231 (WHAAGTYRIA…LGAVQMGLIY (123 aa)) constitute a cross-link (tryptophyl-tyrosyl-methioninium (Trp-Tyr) (with M-257)). His110 acts as the Proton acceptor in catalysis. Positions 231-257 (YVNPEGPNGQPDPLAAARDIRETFSRM) form a cross-link, tryptophyl-tyrosyl-methioninium (Tyr-Met) (with W-109). A heme b-binding site is contributed by His272.

Belongs to the peroxidase family. Peroxidase/catalase subfamily. Homodimer or homotetramer. Heme b is required as a cofactor. In terms of processing, formation of the three residue Trp-Tyr-Met cross-link is important for the catalase, but not the peroxidase activity of the enzyme.

It catalyses the reaction H2O2 + AH2 = A + 2 H2O. It carries out the reaction 2 H2O2 = O2 + 2 H2O. Functionally, bifunctional enzyme with both catalase and broad-spectrum peroxidase activity. The polypeptide is Catalase-peroxidase (Rhodococcus jostii (strain RHA1)).